We begin with the raw amino-acid sequence, 892 residues long: Translation initiation factor IF-2 (892 aa).

Disordered regions lie at residues 32–102 and 114–300; these read LAQA…PGDA and KAPE…KQAE. The span at 35–48 shows a compositional bias: polar residues; sequence AGSSDTKNSPASKA. Residues 139-166 are compositionally biased toward basic and acidic residues; sequence QEEKKESSEETSPERVEETLIIRTRTEP. The segment covering 200–211 has biased composition (low complexity); that stretch reads AASTEETTQQQP. The segment covering 212–224 has biased composition (polar residues); the sequence is RQNDAASYNNKQQ. A compositionally biased stretch (low complexity) spans 225-238; sequence PSGTSSRPASSAPS. The segment covering 252-276 has biased composition (basic and acidic residues); that stretch reads RGSERDRSKRSDESVKAFTGRDRYG. Residues 397–566 form the tr-type G domain; the sequence is IRSPIVAFMG…ALQAEVLELK (170 aa). The G1 stretch occupies residues 406–413; it reads GHVDHGKT. 406 to 413 provides a ligand contact to GTP; sequence GHVDHGKT. The tract at residues 431 to 435 is G2; that stretch reads AITQH. A G3 region spans residues 452-455; sequence DTPG. Residues 452-456 and 506-509 contribute to the GTP site; these read DTPGH and NKCD. Positions 506–509 are G4; it reads NKCD. Residues 542–544 form a G5 region; sequence SAK.

It belongs to the TRAFAC class translation factor GTPase superfamily. Classic translation factor GTPase family. IF-2 subfamily.

It is found in the cytoplasm. Functionally, one of the essential components for the initiation of protein synthesis. Protects formylmethionyl-tRNA from spontaneous hydrolysis and promotes its binding to the 30S ribosomal subunits. Also involved in the hydrolysis of GTP during the formation of the 70S ribosomal complex. The sequence is that of Translation initiation factor IF-2 from Chlamydia trachomatis serovar A (strain ATCC VR-571B / DSM 19440 / HAR-13).